Here is a 593-residue protein sequence, read N- to C-terminus: NADH-quinone oxidoreductase subunit C/D (593 aa).

The tract at residues 1–184 is NADH dehydrogenase I subunit C; the sequence is MTADNAIFIP…DPYSLTLAKQ (184 aa). An NADH dehydrogenase I subunit D region spans residues 208–593; sequence DYMFLNLGPN…IDFVMADVDR (386 aa).

This sequence in the N-terminal section; belongs to the complex I 30 kDa subunit family. The protein in the C-terminal section; belongs to the complex I 49 kDa subunit family. In terms of assembly, NDH-1 is composed of 13 different subunits. Subunits NuoB, CD, E, F, and G constitute the peripheral sector of the complex.

The protein localises to the cell inner membrane. The catalysed reaction is a quinone + NADH + 5 H(+)(in) = a quinol + NAD(+) + 4 H(+)(out). Its function is as follows. NDH-1 shuttles electrons from NADH, via FMN and iron-sulfur (Fe-S) centers, to quinones in the respiratory chain. The immediate electron acceptor for the enzyme in this species is believed to be ubiquinone. Couples the redox reaction to proton translocation (for every two electrons transferred, four hydrogen ions are translocated across the cytoplasmic membrane), and thus conserves the redox energy in a proton gradient. This Pseudomonas putida (strain GB-1) protein is NADH-quinone oxidoreductase subunit C/D.